The primary structure comprises 287 residues: ATP synthase gamma chain (287 aa).

The protein belongs to the ATPase gamma chain family. As to quaternary structure, F-type ATPases have 2 components, CF(1) - the catalytic core - and CF(0) - the membrane proton channel. CF(1) has five subunits: alpha(3), beta(3), gamma(1), delta(1), epsilon(1). CF(0) has three main subunits: a, b and c.

The protein resides in the cell inner membrane. Functionally, produces ATP from ADP in the presence of a proton gradient across the membrane. The gamma chain is believed to be important in regulating ATPase activity and the flow of protons through the CF(0) complex. This chain is ATP synthase gamma chain, found in Edwardsiella ictaluri (strain 93-146).